Here is a 295-residue protein sequence, read N- to C-terminus: GTPase Era (295 aa).

Residues 3 to 170 (KSGFVTIVGR…VDLMKTELPE (168 aa)) form the Era-type G domain. Residues 11–18 (GRPNVGKS) are G1. Residue 11 to 18 (GRPNVGKS) coordinates GTP. Residues 37-41 (QTTRN) form a G2 region. Residues 58–61 (DTPG) are G3. Residues 58–62 (DTPGI) and 120–123 (NKID) contribute to the GTP site. Positions 120-123 (NKID) are G4. Positions 149 to 151 (IAA) are G5. A KH type-2 domain is found at 201–278 (LRDEVPHGIA…NVKIWVKVRK (78 aa)).

It belongs to the TRAFAC class TrmE-Era-EngA-EngB-Septin-like GTPase superfamily. Era GTPase family. Monomer.

Its subcellular location is the cytoplasm. It localises to the cell membrane. An essential GTPase that binds both GDP and GTP, with rapid nucleotide exchange. Plays a role in 16S rRNA processing and 30S ribosomal subunit biogenesis and possibly also in cell cycle regulation and energy metabolism. The chain is GTPase Era from Clostridium botulinum (strain Alaska E43 / Type E3).